The chain runs to 394 residues: Elongation factor Tu 1 (394 aa).

Positions 10–204 constitute a tr-type G domain; that stretch reads KPHVNVGTIG…FLDSYIPEPE (195 aa). The tract at residues 19 to 26 is G1; that stretch reads GHVDHGKT. A GTP-binding site is contributed by 19–26; sequence GHVDHGKT. Threonine 26 serves as a coordination point for Mg(2+). The tract at residues 60 to 64 is G2; it reads GITIN. Residues 81–84 form a G3 region; that stretch reads DCPG. GTP contacts are provided by residues 81 to 85 and 136 to 139; these read DCPGH and NKCD. Positions 136 to 139 are G4; the sequence is NKCD. A G5 region spans residues 174 to 176; sequence SAL.

The protein belongs to the TRAFAC class translation factor GTPase superfamily. Classic translation factor GTPase family. EF-Tu/EF-1A subfamily. Monomer.

The protein resides in the cytoplasm. It catalyses the reaction GTP + H2O = GDP + phosphate + H(+). GTP hydrolase that promotes the GTP-dependent binding of aminoacyl-tRNA to the A-site of ribosomes during protein biosynthesis. The polypeptide is Elongation factor Tu 1 (Shigella flexneri serotype 5b (strain 8401)).